The primary structure comprises 339 residues: tRNA dimethylallyltransferase (339 aa).

ATP is bound at residue 33-40 (GPTASGKT). 35-40 (TASGKT) contributes to the substrate binding site. Interaction with substrate tRNA regions lie at residues 58 to 61 (DSLL) and 182 to 186 (QRIQR).

This sequence belongs to the IPP transferase family. As to quaternary structure, monomer. Mg(2+) is required as a cofactor.

It catalyses the reaction adenosine(37) in tRNA + dimethylallyl diphosphate = N(6)-dimethylallyladenosine(37) in tRNA + diphosphate. Catalyzes the transfer of a dimethylallyl group onto the adenine at position 37 in tRNAs that read codons beginning with uridine, leading to the formation of N6-(dimethylallyl)adenosine (i(6)A). The chain is tRNA dimethylallyltransferase from Acidithiobacillus ferrooxidans (strain ATCC 23270 / DSM 14882 / CIP 104768 / NCIMB 8455) (Ferrobacillus ferrooxidans (strain ATCC 23270)).